The following is a 387-amino-acid chain: MSSLPRNAVARNSKMHKKRDSGVKLSRNINTLDAVCKKHAVGNLIFRNCKMASYEGRVSFVDHEETRGNMRSGVIVVKATSIYSSEDIYDVVKVREDKIARDLKKRQEDYEKTKLEVERLKRSEELANKLANNDPKHDQLVEKLNENNTVEPNNESTEESVEQITEQTVEQTTEQTVEESVEQTTEKTTQQTAEESVEQSTEQTVEKSGDQSTEKTTQQTAEESVEQSTEQPIEESNKNTNQNNDNKKKKKEKNKYYRNFMKDIKSKFSLKLRPENNYFEVKAETTDMIIEHSVVYEIVMVPPTKETYLLVIGDLQMKSSYLRQIDPQYKMDAVLKEQTEFMERIKAKEQLKIHQSPNNKLEPEDMILDDGTSTLTEIEYLGLEEES.

The segment at 1–23 is disordered; sequence MSSLPRNAVARNSKMHKKRDSGV. The stretch at 98–129 forms a coiled coil; it reads KIARDLKKRQEDYEKTKLEVERLKRSEELANK. Residues 146–255 form a disordered region; sequence ENNTVEPNNE…NKKKKKEKNK (110 aa). 2 stretches are compositionally biased toward low complexity: residues 162–175 and 182–194; these read EQIT…TTEQ and EQTT…QTAE. The segment covering 204–213 has biased composition (basic and acidic residues); that stretch reads TVEKSGDQST. Positions 214–231 are enriched in polar residues; it reads EKTTQQTAEESVEQSTEQ.

This is an uncharacterized protein from Acanthamoeba polyphaga mimivirus (APMV).